A 127-amino-acid chain; its full sequence is Ribosome-binding factor A (127 aa).

The protein belongs to the RbfA family. As to quaternary structure, monomer. Binds 30S ribosomal subunits, but not 50S ribosomal subunits or 70S ribosomes.

It localises to the cytoplasm. Its function is as follows. One of several proteins that assist in the late maturation steps of the functional core of the 30S ribosomal subunit. Associates with free 30S ribosomal subunits (but not with 30S subunits that are part of 70S ribosomes or polysomes). Required for efficient processing of 16S rRNA. May interact with the 5'-terminal helix region of 16S rRNA. The protein is Ribosome-binding factor A of Stenotrophomonas maltophilia (strain K279a).